The chain runs to 705 residues: Ribosomal RNA large subunit methyltransferase K/L (705 aa).

A THUMP domain is found at Leu-43–Leu-154.

The protein belongs to the methyltransferase superfamily. RlmKL family.

It localises to the cytoplasm. The catalysed reaction is guanosine(2445) in 23S rRNA + S-adenosyl-L-methionine = N(2)-methylguanosine(2445) in 23S rRNA + S-adenosyl-L-homocysteine + H(+). The enzyme catalyses guanosine(2069) in 23S rRNA + S-adenosyl-L-methionine = N(2)-methylguanosine(2069) in 23S rRNA + S-adenosyl-L-homocysteine + H(+). In terms of biological role, specifically methylates the guanine in position 2445 (m2G2445) and the guanine in position 2069 (m7G2069) of 23S rRNA. In Pectobacterium atrosepticum (strain SCRI 1043 / ATCC BAA-672) (Erwinia carotovora subsp. atroseptica), this protein is Ribosomal RNA large subunit methyltransferase K/L.